An 804-amino-acid chain; its full sequence is Leucine--tRNA ligase (804 aa).

The short motif at 40–51 (PYPSGAGLHVGH) is the 'HIGH' region element. The 'KMSKS' region signature appears at 576–580 (KMSKS). ATP is bound at residue Lys-579.

The protein belongs to the class-I aminoacyl-tRNA synthetase family.

It localises to the cytoplasm. The enzyme catalyses tRNA(Leu) + L-leucine + ATP = L-leucyl-tRNA(Leu) + AMP + diphosphate. The chain is Leucine--tRNA ligase from Staphylococcus aureus (strain bovine RF122 / ET3-1).